We begin with the raw amino-acid sequence, 155 residues long: Small ribosomal subunit protein uS7 (155 aa).

This sequence belongs to the universal ribosomal protein uS7 family. In terms of assembly, part of the 30S ribosomal subunit. Contacts proteins S9 and S11.

One of the primary rRNA binding proteins, it binds directly to 16S rRNA where it nucleates assembly of the head domain of the 30S subunit. Is located at the subunit interface close to the decoding center, probably blocks exit of the E-site tRNA. The sequence is that of Small ribosomal subunit protein uS7 from Helicobacter hepaticus (strain ATCC 51449 / 3B1).